Consider the following 208-residue polypeptide: Large ribosomal subunit protein uL3 (208 aa).

The residue at position 150 (Gln-150) is an N5-methylglutamine.

This sequence belongs to the universal ribosomal protein uL3 family. As to quaternary structure, part of the 50S ribosomal subunit. Forms a cluster with proteins L14 and L19. Post-translationally, methylated by PrmB.

Functionally, one of the primary rRNA binding proteins, it binds directly near the 3'-end of the 23S rRNA, where it nucleates assembly of the 50S subunit. In Buchnera aphidicola subsp. Cinara cedri (strain Cc), this protein is Large ribosomal subunit protein uL3.